Here is a 117-residue protein sequence, read N- to C-terminus: Large ribosomal subunit protein bL20c (117 aa).

This sequence belongs to the bacterial ribosomal protein bL20 family.

The protein localises to the plastid. The protein resides in the chloroplast. Functionally, binds directly to 23S ribosomal RNA and is necessary for the in vitro assembly process of the 50S ribosomal subunit. It is not involved in the protein synthesizing functions of that subunit. The chain is Large ribosomal subunit protein bL20c from Carica papaya (Papaya).